A 291-amino-acid chain; its full sequence is Protein ILRUN (291 aa).

Positions 199-291 are disordered; that stretch reads NTQPHRKVEG…LHGPYPFGQS (93 aa). The segment covering 212-228 has biased composition (polar residues); it reads PFASPQKNRQSDENNLT. Residues Ser215, Ser222, and Ser265 each carry the phosphoserine modification. A compositionally biased stretch (low complexity) spans 257-276; it reads LSQSSVNLSPSSPANNLSVV.

In terms of assembly, interacts with IRF3; the interaction inhibits IRF3 binding to its DNA consensus sequence.

It localises to the cytoplasm. Its subcellular location is the nucleus. Functionally, negative regulator of innate antiviral response. Blocks IRF3-dependent cytokine production such as IFNA, IFNB and TNF. Interacts with IRF3 and inhibits IRF3 recruitment to type I IFN promoter sequences while also reducing nuclear levels of the coactivators EP300 and CREBBP. The polypeptide is Protein ILRUN (Mus musculus (Mouse)).